The following is a 118-amino-acid chain: Acetylcholine receptor subunit beta (118 aa).

Residues 1–15 form the signal peptide; it reads APTVALLLLCALCSA.

The protein belongs to the ligand-gated ion channel (TC 1.A.9) family. Acetylcholine receptor (TC 1.A.9.1) subfamily. Beta-1/CHRNB1 sub-subfamily. In terms of assembly, pentamer of two alpha chains, and one each of the beta, delta, and gamma chains.

The protein localises to the postsynaptic cell membrane. It localises to the cell membrane. The enzyme catalyses K(+)(in) = K(+)(out). It carries out the reaction Na(+)(in) = Na(+)(out). After binding acetylcholine, the AChR responds by an extensive change in conformation that affects all subunits and leads to opening of an ion-conducting channel across the plasma membrane. The chain is Acetylcholine receptor subunit beta (CHRNB1) from Gallus gallus (Chicken).